We begin with the raw amino-acid sequence, 445 residues long: tRNA(Ile)-lysidine synthase (445 aa).

ATP is bound at residue 38-43; sequence SGGLDS.

This sequence belongs to the tRNA(Ile)-lysidine synthase family.

The protein localises to the cytoplasm. It carries out the reaction cytidine(34) in tRNA(Ile2) + L-lysine + ATP = lysidine(34) in tRNA(Ile2) + AMP + diphosphate + H(+). Ligates lysine onto the cytidine present at position 34 of the AUA codon-specific tRNA(Ile) that contains the anticodon CAU, in an ATP-dependent manner. Cytidine is converted to lysidine, thus changing the amino acid specificity of the tRNA from methionine to isoleucine. The protein is tRNA(Ile)-lysidine synthase of Neisseria gonorrhoeae (strain ATCC 700825 / FA 1090).